We begin with the raw amino-acid sequence, 939 residues long: Translation initiation factor IF-2 (939 aa).

A disordered region spans residues 57 to 274; that stretch reads RLKPAAPAAP…APTKKNEQKI (218 aa). 2 stretches are compositionally biased toward basic and acidic residues: residues 83–122 and 129–138; these read MEPK…KESV and LEQEPPKEEL. 2 stretches are compositionally biased toward polar residues: residues 146 to 158 and 170 to 180; these read ESAS…SNPL and VATTLATQTDA. Residues 208 to 227 show a composition bias toward basic and acidic residues; sequence KRSEEPAPKADRPSLEEART. Residues 252 to 262 are compositionally biased toward basic residues; it reads ARKKKKEKKKP. The 170-residue stretch at 438 to 607 folds into the tr-type G domain; the sequence is ERPPVVTIMG…LVQSELLELK (170 aa). The tract at residues 447 to 454 is G1; that stretch reads GHVDHGKT. 447 to 454 is a GTP binding site; it reads GHVDHGKT. The tract at residues 472 to 476 is G2; the sequence is GITQH. Residues 493-496 form a G3 region; that stretch reads DTPG. Residues 493-497 and 547-550 contribute to the GTP site; these read DTPGH and NKVD. A G4 region spans residues 547–550; that stretch reads NKVD. The segment at 583–585 is G5; sequence SAK.

Belongs to the TRAFAC class translation factor GTPase superfamily. Classic translation factor GTPase family. IF-2 subfamily.

Its subcellular location is the cytoplasm. Functionally, one of the essential components for the initiation of protein synthesis. Protects formylmethionyl-tRNA from spontaneous hydrolysis and promotes its binding to the 30S ribosomal subunits. Also involved in the hydrolysis of GTP during the formation of the 70S ribosomal complex. The chain is Translation initiation factor IF-2 from Wolinella succinogenes (strain ATCC 29543 / DSM 1740 / CCUG 13145 / JCM 31913 / LMG 7466 / NCTC 11488 / FDC 602W) (Vibrio succinogenes).